A 225-amino-acid chain; its full sequence is Biosynthetic peptidoglycan transglycosylase (225 aa).

A helical membrane pass occupies residues 12 to 32; that stretch reads IWFVAWRFLLLFVIVLFLFRF.

The protein belongs to the glycosyltransferase 51 family.

It is found in the cell inner membrane. The catalysed reaction is [GlcNAc-(1-&gt;4)-Mur2Ac(oyl-L-Ala-gamma-D-Glu-L-Lys-D-Ala-D-Ala)](n)-di-trans,octa-cis-undecaprenyl diphosphate + beta-D-GlcNAc-(1-&gt;4)-Mur2Ac(oyl-L-Ala-gamma-D-Glu-L-Lys-D-Ala-D-Ala)-di-trans,octa-cis-undecaprenyl diphosphate = [GlcNAc-(1-&gt;4)-Mur2Ac(oyl-L-Ala-gamma-D-Glu-L-Lys-D-Ala-D-Ala)](n+1)-di-trans,octa-cis-undecaprenyl diphosphate + di-trans,octa-cis-undecaprenyl diphosphate + H(+). It participates in cell wall biogenesis; peptidoglycan biosynthesis. Its function is as follows. Peptidoglycan polymerase that catalyzes glycan chain elongation from lipid-linked precursors. This Marinomonas sp. (strain MWYL1) protein is Biosynthetic peptidoglycan transglycosylase.